An 822-amino-acid chain; its full sequence is Telomere length regulation protein TEL2 homolog (822 aa).

A disordered region spans residues 442–504 (NDDEEEQPDA…ADQEKKKSAP (63 aa)). Positions 465 to 477 (VSSQSVASDPGNG) are enriched in polar residues. A compositionally biased stretch (acidic residues) spans 480-489 (SELDSDDDLT).

The protein belongs to the TEL2 family.

The protein localises to the cytoplasm. The protein resides in the membrane. It localises to the nucleus. In terms of biological role, regulator of the DNA damage response (DDR). Part of the TTT complex that is required to stabilize protein levels of the phosphatidylinositol 3-kinase-related protein kinase (PIKK) family proteins. Promotes assembly, stabilizes and maintains the activity of TORC complexes, which regulate cell growth and survival in response to nutrient and hormonal signals. May be involved in telomere length regulation. The polypeptide is Telomere length regulation protein TEL2 homolog (telo2) (Danio rerio (Zebrafish)).